We begin with the raw amino-acid sequence, 350 residues long: Twinfilin-1 (350 aa).

S2 bears the N-acetylserine mark. The ADF-H 1 domain maps to 2–139 (SHRTGIQASE…SLHGYKKYLL (138 aa)). Phosphoserine occurs at positions 143 and 277. The ADF-H 2 domain occupies 175-313 (LQGVAFPISR…TADFLYEEVH (139 aa)). Residue Y309 is modified to Phosphotyrosine. The disordered stretch occupies residues 316 to 350 (QHAHKQSFAKPKGPAGKRGIRRLIRGPAETEATTD). T349 is subject to Phosphothreonine.

This sequence belongs to the actin-binding proteins ADF family. Twinfilin subfamily. In terms of assembly, interacts with G-actin; ADP-actin form and capping protein (CP). May also be able to interact with TWF2 and phosphoinositides, PI(4,5)P2. When bound to PI(4,5)P2, it is down-regulated. Interacts with ACTG1. Post-translationally, phosphorylated on serine and threonine residues.

The protein resides in the cytoplasm. It localises to the cytoskeleton. Actin-binding protein involved in motile and morphological processes. Inhibits actin polymerization, likely by sequestering G-actin. By capping the barbed ends of filaments, it also regulates motility. Seems to play an important role in clathrin-mediated endocytosis and distribution of endocytic organelles. The chain is Twinfilin-1 (TWF1) from Pongo abelii (Sumatran orangutan).